A 91-amino-acid polypeptide reads, in one-letter code: ATP synthase subunit c (91 aa).

Transmembrane regions (helical) follow at residues 4 to 24 (FTMCMLAAGFGMAIGAFGTGI) and 53 to 73 (IGLAMIESLAIYVLVVCLIIL).

It belongs to the ATPase C chain family. As to quaternary structure, F-type ATPases have 2 components, F(1) - the catalytic core - and F(0) - the membrane proton channel. F(1) has five subunits: alpha(3), beta(3), gamma(1), delta(1), epsilon(1). F(0) has three main subunits: a(1), b(2) and c(10-14). The alpha and beta chains form an alternating ring which encloses part of the gamma chain. F(1) is attached to F(0) by a central stalk formed by the gamma and epsilon chains, while a peripheral stalk is formed by the delta and b chains.

The protein resides in the cell inner membrane. Functionally, f(1)F(0) ATP synthase produces ATP from ADP in the presence of a proton or sodium gradient. F-type ATPases consist of two structural domains, F(1) containing the extramembraneous catalytic core and F(0) containing the membrane proton channel, linked together by a central stalk and a peripheral stalk. During catalysis, ATP synthesis in the catalytic domain of F(1) is coupled via a rotary mechanism of the central stalk subunits to proton translocation. In terms of biological role, key component of the F(0) channel; it plays a direct role in translocation across the membrane. A homomeric c-ring of between 10-14 subunits forms the central stalk rotor element with the F(1) delta and epsilon subunits. The chain is ATP synthase subunit c from Trichlorobacter lovleyi (strain ATCC BAA-1151 / DSM 17278 / SZ) (Geobacter lovleyi).